The primary structure comprises 481 residues: Phosphoglucosamine mutase (481 aa).

The active-site Phosphoserine intermediate is the Ser-129. The Mg(2+) site is built by Ser-129, Asp-271, Asp-273, and Asp-275. Ser-129 is subject to Phosphoserine.

It belongs to the phosphohexose mutase family. Mg(2+) serves as cofactor. In terms of processing, activated by phosphorylation.

It carries out the reaction alpha-D-glucosamine 1-phosphate = D-glucosamine 6-phosphate. In terms of biological role, catalyzes the conversion of glucosamine-6-phosphate to glucosamine-1-phosphate. The protein is Phosphoglucosamine mutase of Picosynechococcus sp. (strain ATCC 27264 / PCC 7002 / PR-6) (Agmenellum quadruplicatum).